A 278-amino-acid polypeptide reads, in one-letter code: Maltodextrin transport system permease protein MdxG (278 aa).

A run of 6 helical transmembrane segments spans residues 12 to 32 (ICTYLFLTLLSIVIIYPLLIT), 74 to 94 (TLVIALSVMVLQVTIVTLAGY), 108 to 128 (LIFFLIIQMVPTMAALTAFYV), 131 to 151 (MLIGALDQYWFLTAIYIGGGI), 183 to 203 (IFASIVLPLVKPMLAVQALWA), and 242 to 262 (VALFAAGAILAALPICVLFFF). In terms of domain architecture, ABC transmembrane type-1 spans 71–263 (YSNTLVIALS…LPICVLFFFL (193 aa)).

It belongs to the binding-protein-dependent transport system permease family. MalFG subfamily. The complex is composed of two ATP-binding proteins (MsmX), two transmembrane proteins (MdxF and MdxG) and a solute-binding protein (MdxE).

The protein localises to the cell membrane. Its function is as follows. Part of the ABC transporter complex involved in maltodextrin import. Probably responsible for the translocation of the substrate across the membrane. The protein is Maltodextrin transport system permease protein MdxG (mdxG) of Bacillus subtilis (strain 168).